The following is a 303-amino-acid chain: Pyridoxal 5'-phosphate synthase subunit PdxS (303 aa).

Residue D33 participates in D-ribose 5-phosphate binding. Residue K90 is the Schiff-base intermediate with D-ribose 5-phosphate of the active site. G162 provides a ligand contact to D-ribose 5-phosphate. R174 lines the D-glyceraldehyde 3-phosphate pocket. D-ribose 5-phosphate contacts are provided by residues G223 and 244–245 (GS).

It belongs to the PdxS/SNZ family. As to quaternary structure, in the presence of PdxT, forms a dodecamer of heterodimers.

The enzyme catalyses aldehydo-D-ribose 5-phosphate + D-glyceraldehyde 3-phosphate + L-glutamine = pyridoxal 5'-phosphate + L-glutamate + phosphate + 3 H2O + H(+). Its pathway is cofactor biosynthesis; pyridoxal 5'-phosphate biosynthesis. Its function is as follows. Catalyzes the formation of pyridoxal 5'-phosphate from ribose 5-phosphate (RBP), glyceraldehyde 3-phosphate (G3P) and ammonia. The ammonia is provided by the PdxT subunit. Can also use ribulose 5-phosphate and dihydroxyacetone phosphate as substrates, resulting from enzyme-catalyzed isomerization of RBP and G3P, respectively. This Mycobacterium avium (strain 104) protein is Pyridoxal 5'-phosphate synthase subunit PdxS.